Here is a 193-residue protein sequence, read N- to C-terminus: Protein PapJ (193 aa).

Positions 1–27 (MVVNKTTAVLYLIALSLSGFIHTFLRA) are cleaved as a signal peptide.

It is found in the periplasm. Its function is as follows. This protein maintains pilus integrity and thus is an important participant in pilus assembly. It may function as molecular chaperone directly or indirectly in the correct assembly of PapA subunits. The chain is Protein PapJ (papJ) from Escherichia coli.